The following is a 289-amino-acid chain: Polyketide biosynthesis malonyl CoA-acyl carrier protein transacylase BaeC (289 aa).

Catalysis depends on residues Ser87 and His193.

It belongs to the FabD family.

The protein resides in the cytoplasm. It catalyses the reaction holo-[ACP] + malonyl-CoA = malonyl-[ACP] + CoA. It participates in antibiotic biosynthesis; bacillaene biosynthesis. Functionally, involved in some intermediate steps for the synthesis of the antibiotic polyketide bacillaene which is involved in secondary metabolism. It catalyzes the transfer of the malonyl-CoA group to the acyl-carrier-protein AcpK (Mal-AcpK). The polypeptide is Polyketide biosynthesis malonyl CoA-acyl carrier protein transacylase BaeC (baeC) (Bacillus velezensis (strain DSM 23117 / BGSC 10A6 / LMG 26770 / FZB42) (Bacillus amyloliquefaciens subsp. plantarum)).